The primary structure comprises 403 residues: Phosphoglycerate kinase (403 aa).

Substrate-binding positions include 22–24 (DFN), Arg-37, 60–63 (HFGR), Arg-119, and Arg-152. ATP-binding positions include Lys-202, Glu-324, and 354-357 (GGDT).

It belongs to the phosphoglycerate kinase family. As to quaternary structure, monomer.

Its subcellular location is the cytoplasm. The catalysed reaction is (2R)-3-phosphoglycerate + ATP = (2R)-3-phospho-glyceroyl phosphate + ADP. Its pathway is carbohydrate degradation; glycolysis; pyruvate from D-glyceraldehyde 3-phosphate: step 2/5. This is Phosphoglycerate kinase from Maricaulis maris (strain MCS10) (Caulobacter maris).